The primary structure comprises 540 residues: Chaperonin GroEL (540 aa).

ATP contacts are provided by residues 29-32 (TLGP), 86-90 (DGTTT), G413, 476-478 (NAA), and D492.

The protein belongs to the chaperonin (HSP60) family. In terms of assembly, forms a cylinder of 14 subunits composed of two heptameric rings stacked back-to-back. Interacts with the co-chaperonin GroES.

The protein resides in the cytoplasm. It carries out the reaction ATP + H2O + a folded polypeptide = ADP + phosphate + an unfolded polypeptide.. In terms of biological role, together with its co-chaperonin GroES, plays an essential role in assisting protein folding. The GroEL-GroES system forms a nano-cage that allows encapsulation of the non-native substrate proteins and provides a physical environment optimized to promote and accelerate protein folding. This chain is Chaperonin GroEL, found in Streptococcus anginosus.